Consider the following 56-residue polypeptide: Metallothionein (56 aa).

Zn(2+)-binding residues include Cys-9, Cys-11, Cys-14, Cys-16, Cys-32, Cys-36, His-40, Cys-47, His-49, Cys-52, and Cys-54.

This sequence belongs to the metallothionein superfamily. Type 14 family.

Functionally, may play a role in essential metal ion homeostasis (especially zinc homeostasis) and resistance to certain non-essential metal ions. Binds four zinc ions. In Synechococcus elongatus (strain ATCC 33912 / PCC 7942 / FACHB-805) (Anacystis nidulans R2), this protein is Metallothionein (smtA).